Here is a 206-residue protein sequence, read N- to C-terminus: MAPNHLSVREMREDEKPLVLEMLKAGVKDTENRVALHALTRPPALLLLAAASSGLRFILASFALALLLPVFLAVAAVKLGLRARWGSLPPPGGLGGPWVAVRGSGDVCGVLALAPGANVGDGARVTRLSVSRWHRRRGVGRRLLAFAEARARAWAGSMGEPRARLVVPVAVAAWGVAGLLEACGYQAEGGWGCMGYMLVREFSKDL.

Residues 6 to 206 (LSVREMREDE…MLVREFSKDL (201 aa)) enclose the N-acetyltransferase domain. A helical membrane pass occupies residues 57–77 (FILASFALALLLPVFLAVAAV).

It belongs to the camello family.

The protein localises to the membrane. In terms of biological role, probable acetyltransferase that binds the 5'-GGACTACAG-3' sequence of coproporphyrinogen oxidase promoter. Able to activate transcription of a reporter construct in vitro. Probable acetyltransferase. Its function is as follows. May act as a transcription factor regulating the expression of coproporphyrinogen oxidase by binding to a promoter regulatory element. The chain is Probable N-acetyltransferase 14 (Nat14) from Mus musculus (Mouse).